Here is a 406-residue protein sequence, read N- to C-terminus: LIM/homeobox protein Lhx2 (406 aa).

LIM zinc-binding domains follow at residues 53 to 105 (CAGC…CKED) and 115 to 168 (CARC…CRLH). Positions 250 to 270 (DAEHLDRDQPYPSSQKTKRMR) are disordered. A DNA-binding region (homeobox) is located at residues 266–325 (TKRMRTSFKHHQLRTMKSYFAINHNPDAKDLKQLAQKTGLTKRVLQVWFQNARAKFRRNL). The Nuclear localization signal motif lies at 307-323 (KRVLQVWFQNARAKFRR). Residues 328–356 (QENTGVDKTSDATLQTGTPSGPASELSNA) show a composition bias toward polar residues. Disordered stretches follow at residues 328-375 (QENT…SPTL) and 387-406 (GNLEGHEPHSPSQTTLTNLF). Low complexity predominate over residues 357-375 (SLSPSSTPTTLTDLTSPTL). The span at 396–406 (SPSQTTLTNLF) shows a compositional bias: polar residues.

Interacts (via LIM domains) with CITED2. Interacts with POU4F2 isoform 1.

It is found in the nucleus. In terms of biological role, acts as a transcriptional activator. Stimulates the promoter of the alpha-glycoprotein gene. Transcriptional regulatory protein involved in the control of cell differentiation in developing lymphoid and neural cell types. The sequence is that of LIM/homeobox protein Lhx2 (Lhx2) from Mus musculus (Mouse).